A 145-amino-acid polypeptide reads, in one-letter code: MLNISHYKIIAIGKIRKKWIQEGIEMYLKRLPGLEVKEIKDSTQLKEEHTIKEIISKNEFLVTLNENGQSFTSKQLATKLLNSHNQNITFVIGGASGLTSSLNNLASWQLSLSPLTFPHEIARLLLIEQLYRAKTITQGGPYHKE.

S-adenosyl-L-methionine is bound by residues Leu-64, Gly-93, and 112-117; that span reads LSPLTF.

This sequence belongs to the RNA methyltransferase RlmH family. As to quaternary structure, homodimer.

Its subcellular location is the cytoplasm. The catalysed reaction is pseudouridine(1915) in 23S rRNA + S-adenosyl-L-methionine = N(3)-methylpseudouridine(1915) in 23S rRNA + S-adenosyl-L-homocysteine + H(+). Functionally, specifically methylates the pseudouridine at position 1915 (m3Psi1915) in 23S rRNA. In Prochlorococcus marinus (strain NATL1A), this protein is Ribosomal RNA large subunit methyltransferase H.